The sequence spans 211 residues: Arginine exporter protein ArgO (211 aa).

Topologically, residues 1–38 are cytoplasmic; sequence MFSYYFQGLALGAAMILPLGPQNAFVMNQGIRRQYHIM. Residues 39–58 traverse the membrane as a helical segment; sequence IALLCAISDLVLICAGIFGG. The Periplasmic portion of the chain corresponds to 59-63; sequence SALLM. Residues 64 to 91 traverse the membrane as a helical segment; it reads QSPWLLALVTWGGVAFLLWYGFGAFKTA. Over 92 to 102 the chain is Cytoplasmic; the sequence is MSSNIELASAE. The chain crosses the membrane as a helical span at residues 103–130; that stretch reads VMKQGRWKIIATMLAVTWLNPHVYLDTF. Topologically, residues 131–140 are periplasmic; that stretch reads VVLGSLGGQL. The helical transmembrane segment at 141-170 threads the bilayer; it reads DVEPKRWFALGTISASFLWFFGLALLAAWL. Residues 171–173 are Cytoplasmic-facing; the sequence is APR. A helical membrane pass occupies residues 174 to 200; sequence LRTAKAQRIINLVVGCVMWFIALQLAR. The Periplasmic portion of the chain corresponds to 201-211; that stretch reads DGIAHAQALFS.

Belongs to the LysE/ArgO transporter (TC 2.A.75) family. As to quaternary structure, monomer.

Its subcellular location is the cell inner membrane. It carries out the reaction L-arginine(in) = L-arginine(out). Involved in the export of arginine. Important to control the intracellular level of arginine and the correct balance between arginine and lysine. May also be involved in the export of canavanine (a plant-derived antimetabolite). The chain is Arginine exporter protein ArgO from Escherichia coli (strain K12).